The following is a 259-amino-acid chain: Major cell-binding factor (259 aa).

The N-terminal stretch at 1–26 is a signal peptide; the sequence is MVFRKSLLKLAVFALGACVAFSNANA.

This sequence belongs to the bacterial solute-binding protein 3 family.

The protein resides in the cell surface. Functionally, common antigen and a major cell adherence molecule. Most probably involved, with PEB1C, in a binding-protein-dependent transport system for an amino acid. May be involved in binding to intestinal cells. This is Major cell-binding factor (peb1A) from Campylobacter jejuni subsp. jejuni serotype O:2 (strain ATCC 700819 / NCTC 11168).